We begin with the raw amino-acid sequence, 968 residues long: uncharacterized protein (968 aa).

Disordered regions lie at residues 124-177 (SSIS…FSFP), 348-437 (QEDS…VNDS), 572-595 (TTTT…QQNT), 608-627 (PKAS…GSSK), and 837-877 (KASK…KKGK). Residues 131–157 (TIESNYLSNPSSPCQSTPILESSTPFS) show a composition bias toward polar residues. Low complexity-rich tracts occupy residues 158 to 177 (QKLM…FSFP), 352 to 431 (NNNN…NCNN), and 572 to 593 (TTTT…QQQQ). Residues 841–857 (DSSSSPTASSAAPGDSS) are compositionally biased toward low complexity.

This is an uncharacterized protein from Dictyostelium discoideum (Social amoeba).